The chain runs to 311 residues: Olfactory receptor-like protein OLF1 (311 aa).

Residues 1-24 (MDGNYTLVTEFILLGFPTRPELQI) are Extracellular-facing. N-linked (GlcNAc...) asparagine glycosylation occurs at Asn-4. The helical transmembrane segment at 25 to 48 (VLFLVFLTLYGIILTGNIGLMMLI) threads the bilayer. The Cytoplasmic segment spans residues 49-56 (RTDPHLQT). The chain crosses the membrane as a helical span at residues 57-78 (PMYFFLSNLSFADLCFSSAIVP). Over 79–99 (KMLVNFLSENKSISLYGCALQ) the chain is Extracellular. Residues 100–119 (FYFSCAFADTESFILAAMAY) traverse the membrane as a helical segment. At 120 to 138 (DRYVAICNPLLYTVVMSRG) the chain is on the cytoplasmic side. The chain crosses the membrane as a helical span at residues 139-157 (ICVWLIVLSYIGGNMSSLV). Residues 158 to 195 (HTSFAFILKYCDKNVINHFFCDLPPLLKLSCTDTSVNE) lie on the Extracellular side of the membrane. Residues 196-218 (WLLSTYGSSVEIFCFIVIVISYY) traverse the membrane as a helical segment. The Cytoplasmic portion of the chain corresponds to 219 to 235 (FILRSVLRIRSSSGRKK). A helical membrane pass occupies residues 236 to 259 (TFSTCASHLTSVAIYQGTLLFIYS). Residues 260-271 (RPTYLYTPNTDK) lie on the Extracellular side of the membrane. The helical transmembrane segment at 272 to 291 (IISVFYTIIIPVLNPLIYSL) threads the bilayer. Topologically, residues 292–311 (RNKDVKDAAKRAVRLKVDSS) are cytoplasmic.

Belongs to the G-protein coupled receptor 1 family.

The protein localises to the cell membrane. Functionally, putative odorant or sperm cell receptor. This Canis lupus familiaris (Dog) protein is Olfactory receptor-like protein OLF1.